Here is a 629-residue protein sequence, read N- to C-terminus: MNQPIAAIGISDSTRPKTNVRLTISAEHLMDTDVFSKSDPICLVYEKTSGKKATTTEPVQVPTWQDSQWTERGRTEVVMNNLNPQFTKTFLLPYFFEETQLLRFEIYDADSPNVGQDLSPHDFLGRFECVLAQIVSYSTLKAHLGKAEGIGAQWRNKDKNTRTGSITIRAEEDEKCEKIQFDVCGEGLDKKDFFGKSDPYLNFKRKFDDGSAHLVHRTEVKQKTLDPRWATVQINTQTLCGKDGERPIIIECYDHDKWKKGEEPRGEAKFSRDDHIGTAHTTLNELLRGGAGDPVELLLTNEKKKAKKGDKYKCSGTLKIWNSKIIVEPTFLDFISGGTQLEFAVAVDFTASNGAPKNSSSLHYMSADRPNQYELALRSVLSICQHYNSSKTFEAFGFGAKLPNSVSVSAIFSLDLLRGTPEVVGISGVMSAYRHALQNVQLYGPTNFAPIIDTVAQKAQNMIHDSARYQILLIITDGIISDMHATIRSIINASGLPLSIIIIGVGNEDFEKMHELDSDDSLLQQDSRIAQRDIVQFVTIREFLNNGRGVYLDPDVVQENLAREVLFEVPGQLTGYMKQRGFQPRPVENPWTRNSPPPDYDPVLDGIGRRAQAPSPGFQMPVASAPPMY.

2 C2 domains span residues 1 to 144 (MNQP…KAHL) and 162 to 299 (RTGS…ELLL). Residues aspartate 33, aspartate 39, aspartate 108, aspartate 110, aspartate 122, aspartate 192, aspartate 198, aspartate 254, aspartate 256, and aspartate 274 each contribute to the Ca(2+) site. In terms of domain architecture, VWFA spans 342–561 (EFAVAVDFTA…LDPDVVQENL (220 aa)). Disordered regions lie at residues 581-600 (GFQPRPVENPWTRNSPPPDY) and 607-629 (IGRRAQAPSPGFQMPVASAPPMY).

It belongs to the copine family. As to quaternary structure, interacts with nicotinic acetylcholine receptor. It depends on Ca(2+) as a cofactor.

The protein localises to the cell membrane. In terms of biological role, exhibits calcium-dependent phospholipid binding properties. May function in membrane trafficking. Regulates synaptic levels of nicotinic acetylcholine receptor subunit lev-1 and unc-38 in the nerve cord. Involved in nicotinic acetylcholine receptor (nAChR)-mediated sensitivity to nicotine and levamisole. Affects directional sperm motility. In Caenorhabditis briggsae, this protein is Nicotinic receptor-associated protein 1.